The primary structure comprises 263 residues: Endonuclease 8 (263 aa).

Catalysis depends on Pro2, which acts as the Schiff-base intermediate with DNA. The Proton donor role is filled by Glu3. The Proton donor; for beta-elimination activity role is filled by Lys53. DNA contacts are provided by Gln70, Arg125, and Asn169. The segment at 229–263 (KVFHRDGELCERCGGIIEKTTLSSRPFYWCPGCQH) adopts an FPG-type zinc-finger fold. The active-site Proton donor; for delta-elimination activity is Arg253.

It belongs to the FPG family. Requires Zn(2+) as cofactor.

The catalysed reaction is 2'-deoxyribonucleotide-(2'-deoxyribose 5'-phosphate)-2'-deoxyribonucleotide-DNA = a 3'-end 2'-deoxyribonucleotide-(2,3-dehydro-2,3-deoxyribose 5'-phosphate)-DNA + a 5'-end 5'-phospho-2'-deoxyribonucleoside-DNA + H(+). Its function is as follows. Involved in base excision repair of DNA damaged by oxidation or by mutagenic agents. Acts as a DNA glycosylase that recognizes and removes damaged bases. Has a preference for oxidized pyrimidines, such as thymine glycol, 5,6-dihydrouracil and 5,6-dihydrothymine. Has AP (apurinic/apyrimidinic) lyase activity and introduces nicks in the DNA strand. Cleaves the DNA backbone by beta-delta elimination to generate a single-strand break at the site of the removed base with both 3'- and 5'-phosphates. This Shigella boydii serotype 4 (strain Sb227) protein is Endonuclease 8.